A 62-amino-acid chain; its full sequence is Mastoparan-AF (62 aa).

A signal peptide spans 1–25; the sequence is MKNTILILFTAFIALLGFFGMSAEA. AXPX repeat units lie at residues 25–28, 29–32, 33–36, and 43–46; these read ADPI and ADPE. Positions 26–47 are excised as a propeptide; sequence DPIADPIADPISGPNAEADPEA. Phe61 carries the phenylalanine amide modification.

This sequence belongs to the MCD family. Mastoparan subfamily. Expressed by the venom gland.

The protein localises to the secreted. Its subcellular location is the target cell membrane. Its function is as follows. Antimicrobial and mast cell degranulating peptide. Has broad spectrum antibacterial activity against both Gram-positive and Gram-negative bacteria (S.aureus MIC=16-32 ug/ml, S.xylosus MIC=1.5 ug/ml, S.alactolyticus MIC=8 ug/ml, C.koseri MIC=4 ug/ml, E.coli MIC=4-32 ug/ml, K.pneumoniae MIC=32 ug/ml, P.aerugiosa MIC=96 ug/ml, S.choleraesuis MIC=16 ug/ml, S.typhimurium MIC=32 ug/ml, V.parahamelytics MIC=16 ug/ml). Is also active on multi-antibiotic resistant hemolytic E.coli O157:H7. Acts by affecting membrane permeability. On E.coli O157:H7, acts through multiple membrane disruption patterns, including large perforations (full opening) at apical ends (hollow tubes), vesicle budding, forming dents, and membrane corrugation and invagination leading to irregular pits or pores. Exerts 40% lower membrane permeabilization activities on E.coli O157:H7 than on the non-pathogen E.coli BL21. Shows little hemolytic activities on sheep, chicken and human erythrocytes, but with a higher activity on chicken erythrocytes. Its mast cell degranulation activity may be related to the activation of G-protein coupled receptors in mast cells as well as interaction with other proteins located in cell endosomal membranes in the mast cells. This chain is Mastoparan-AF, found in Vespa affinis (Lesser banded hornet).